A 112-amino-acid polypeptide reads, in one-letter code: Protein FAM32A (112 aa).

Positions 23–58 (TKRKKKKKDKDKAKLLEAMGTSKKNEEEKRRGLDKR) are disordered. Basic and acidic residues predominate over residues 45–58 (KKNEEEKRRGLDKR).

It belongs to the FAM32 family.

The protein resides in the nucleus. May induce G2 arrest and apoptosis. May also increase cell sensitivity to apoptotic stimuli. The chain is Protein FAM32A (FAM32A) from Bos taurus (Bovine).